An 838-amino-acid chain; its full sequence is Urease (838 aa).

Residues 400–838 (GAIDCHVHFI…VPLSRNYFLF (439 aa)) form the Urease domain. Positions 405, 407, and 488 each coordinate Ni(2+). Lys488 carries the post-translational modification N6-carboxylysine. Residue His490 coordinates substrate. Positions 517 and 543 each coordinate Ni(2+). His591 acts as the Proton donor in catalysis. Asp631 serves as a coordination point for Ni(2+).

In the C-terminal section; belongs to the metallo-dependent hydrolases superfamily. Urease alpha subunit family. As to quaternary structure, homohexamer. Other oligomeric forms may exist depending on pH and presence of salts. The cofactor is Ni(2+). Post-translationally, carboxylation allows a single lysine to coordinate two nickel ions.

It catalyses the reaction urea + 2 H2O + H(+) = hydrogencarbonate + 2 NH4(+). It participates in nitrogen metabolism; urea degradation; CO(2) and NH(3) from urea (urease route): step 1/1. With respect to regulation, requires the three urease accessory proteins URED, UREF AND UREG for its activation. In terms of biological role, urea hydrolase involved in nitrogen recycling from ureide, purine, and arginine catabolism. The protein is Urease of Arabidopsis thaliana (Mouse-ear cress).